The chain runs to 258 residues: Hydroxyacylglutathione hydrolase (258 aa).

Zn(2+) contacts are provided by His-56, His-58, Asp-60, His-61, His-112, Asp-132, and His-170.

Belongs to the metallo-beta-lactamase superfamily. Glyoxalase II family. Monomer. The cofactor is Zn(2+).

It carries out the reaction an S-(2-hydroxyacyl)glutathione + H2O = a 2-hydroxy carboxylate + glutathione + H(+). It functions in the pathway secondary metabolite metabolism; methylglyoxal degradation; (R)-lactate from methylglyoxal: step 2/2. Functionally, thiolesterase that catalyzes the hydrolysis of S-D-lactoyl-glutathione to form glutathione and D-lactic acid. In Pseudomonas aeruginosa (strain LESB58), this protein is Hydroxyacylglutathione hydrolase.